Reading from the N-terminus, the 231-residue chain is N-acetylmuramate alpha-1-phosphate uridylyltransferase (231 aa).

UTP contacts are provided by residues 11-13 (GER) and lysine 23. Residue asparagine 106 coordinates substrate. Aspartate 108 is a Mg(2+) binding site. Substrate contacts are provided by aspartate 146 and aspartate 213. Aspartate 213 lines the Mg(2+) pocket.

The protein belongs to the nucleotidyltransferase MurU family. Monomer. Requires Mg(2+) as cofactor.

The enzyme catalyses N-acetyl-alpha-D-muramate 1-phosphate + UDP + H(+) = UDP-N-acetyl-alpha-D-muramate + phosphate. Its pathway is cell wall biogenesis; peptidoglycan recycling. In terms of biological role, catalyzes the formation of UDP-N-acetylmuramate (UDP-MurNAc), a crucial precursor of the bacterial peptidoglycan cell wall, from UTP and MurNAc-alpha-1P. Is likely involved in peptidoglycan recycling as part of a cell wall recycling pathway that bypasses de novo biosynthesis of the peptidoglycan precursor UDP-MurNAc. Is able to complement the fosfomycin sensitivity phenotype of a P.putida mutant lacking murU. This is N-acetylmuramate alpha-1-phosphate uridylyltransferase from Neisseria meningitidis serogroup B (strain ATCC BAA-335 / MC58).